Reading from the N-terminus, the 298-residue chain is FH protein interacting protein FIP2 (298 aa).

A BTB domain is found at 9–80; that stretch reads SMVRLNIGGK…LRDGVIPSLS (72 aa). Pentapeptide repeat domains follow at residues 129–165, 166–203, 216–255, and 256–295; these read ERVR…FFSR, TNLQ…GALL, ACLV…NLKG, and AKLS…NMTG.

In terms of assembly, interacts with FH1. In terms of tissue distribution, expressed in all tissues but preferentially in roots and flowers.

It participates in protein modification; protein ubiquitination. May act as a substrate-specific adapter of an E3 ubiquitin-protein ligase complex (CUL3-RBX1-BTB) which mediates the ubiquitination and subsequent proteasomal degradation of target proteins. This Arabidopsis thaliana (Mouse-ear cress) protein is FH protein interacting protein FIP2 (FIP2).